The primary structure comprises 396 residues: Protein PIN-LIKES 5 (396 aa).

Residues 1–5 (MGFWS) are Lumenal-facing. Residues 6 to 26 (LLEVASMPVIQVLFMSLVGAF) form a helical membrane-spanning segment. The Cytoplasmic segment spans residues 27–45 (MASDRCKLFPVEARNSMNK). Residues 46 to 66 (VVFVLFAPALMFANLAQTVTL) traverse the membrane as a helical segment. Topologically, residues 67–73 (EDIISWW) are lumenal. Residues 74 to 94 (FMPVNMGLTFLIGGLLGWLVV) form a helical membrane-spanning segment. Residues 95–106 (KILKPPPYLEGL) are Cytoplasmic-facing. Residues 107–127 (IVATCSAGNMGNLPIILVPAI) traverse the membrane as a helical segment. Topologically, residues 128–144 (CDEDKSPFGNRSVCRTV) are lumenal. The helical transmembrane segment at 145-165 (GLSYASFSMALGGFYIWTYTF) threads the bilayer. Topologically, residues 166–229 (RLIKGSAMKV…WRKGVDFLHE (64 aa)) are cytoplasmic. Residues 230–250 (ILEELLAPPTLGAIIGFIFGA) form a helical membrane-spanning segment. Topologically, residues 251–273 (VRWLRNLIIGDDAPLRIVQSTAK) are lumenal. The chain crosses the membrane as a helical span at residues 274 to 294 (LLGDGTIPCMTIILGGNLIQG). At 295-312 (LRSSAVKPMVVLGIVCVR) the chain is on the cytoplasmic side. The helical transmembrane segment at 313–333 (YIAMPIIGIGIVLTAANLGFL) threads the bilayer. At 334-337 (PADP) the chain is on the lumenal side. Residues 338 to 358 (LFQYVLMLQFTLPPAMNIGTM) form a helical membrane-spanning segment. Residues 359–370 (TQLYNVAQDECS) are Cytoplasmic-facing. The helical transmembrane segment at 371–391 (VLMLWTYLVAILALTVWSTIF) threads the bilayer. The Lumenal segment spans residues 392–396 (LHLLV).

It belongs to the auxin efflux carrier (TC 2.A.69.2) family. As to expression, expressed in seedlings, cauline leaves and flowers.

It localises to the endoplasmic reticulum membrane. Functionally, involved in cellular auxin homeostasis by regulating auxin metabolism. Regulates intracellular auxin accumulation at the endoplasmic reticulum and thus auxin availability for nuclear auxin signaling. This chain is Protein PIN-LIKES 5, found in Arabidopsis thaliana (Mouse-ear cress).